A 119-amino-acid polypeptide reads, in one-letter code: MALNKRELFQKRRLRVRNKLRKISDGRPRLSVHRSSKNISVQVIDDVKGVTLAAASSLEKDLGVVGKNNVEAAAKIGAAIAERAKKAGVEEVIFDRGGFLFHGKIKALADAAREGGLKF.

Belongs to the universal ribosomal protein uL18 family. In terms of assembly, part of the 50S ribosomal subunit; part of the 5S rRNA/L5/L18/L25 subcomplex. Contacts the 5S and 23S rRNAs.

Functionally, this is one of the proteins that bind and probably mediate the attachment of the 5S RNA into the large ribosomal subunit, where it forms part of the central protuberance. This chain is Large ribosomal subunit protein uL18, found in Paracoccus denitrificans (strain Pd 1222).